Here is a 441-residue protein sequence, read N- to C-terminus: Phosphoribosylamine--glycine ligase (441 aa).

Residues 112–319 (RNFMKKYGIE…FTEIMSAVVK (208 aa)) form the ATP-grasp domain. An ATP-binding site is contributed by 139–196 (IEKLGDVAVKPSGLTGGKGVKVMGDQLPDLKAAKDYTSELLEKGPVVIEERFIGEEFT). The Mg(2+) site is built by Gln277, Glu289, and Asn291. 3 residues coordinate Mn(2+): Gln277, Glu289, and Asn291.

Belongs to the GARS family. Requires Mg(2+) as cofactor. It depends on Mn(2+) as a cofactor.

It catalyses the reaction 5-phospho-beta-D-ribosylamine + glycine + ATP = N(1)-(5-phospho-beta-D-ribosyl)glycinamide + ADP + phosphate + H(+). It participates in purine metabolism; IMP biosynthesis via de novo pathway; N(1)-(5-phospho-D-ribosyl)glycinamide from 5-phospho-alpha-D-ribose 1-diphosphate: step 2/2. The polypeptide is Phosphoribosylamine--glycine ligase (Methanosarcina acetivorans (strain ATCC 35395 / DSM 2834 / JCM 12185 / C2A)).